The chain runs to 194 residues: Small ribosomal subunit protein uS7 (194 aa).

The protein belongs to the universal ribosomal protein uS7 family. As to quaternary structure, part of the 30S ribosomal subunit.

In terms of biological role, one of the primary rRNA binding proteins, it binds directly to 16S rRNA where it nucleates assembly of the head domain of the 30S subunit. Is located at the subunit interface close to the decoding center. The sequence is that of Small ribosomal subunit protein uS7 from Methanospirillum hungatei JF-1 (strain ATCC 27890 / DSM 864 / NBRC 100397 / JF-1).